A 358-amino-acid polypeptide reads, in one-letter code: Putative ankyrin repeat protein FPV242 (358 aa).

ANK repeat units lie at residues asparagine 6–valine 35, asparagine 40–tyrosine 69, threonine 91–valine 118, glutamate 119–tyrosine 147, glycine 149–lysine 177, cysteine 180–lysine 209, glutamate 214–threonine 243, asparagine 248–isoleucine 277, glutamate 280–glycine 312, and tyrosine 316–serine 345.

The sequence is that of Putative ankyrin repeat protein FPV242 from Fowlpox virus (strain NVSL) (FPV).